The chain runs to 367 residues: Dihydroorotate dehydrogenase (quinone) (367 aa).

FMN contacts are provided by residues 67 to 71 and Thr91; that span reads AGFDK. Lys71 contacts substrate. 116–120 provides a ligand contact to substrate; it reads NRLGF. Asn145 and Asn178 together coordinate FMN. Position 178 (Asn178) interacts with substrate. Ser181 serves as the catalytic Nucleophile. Residue Asn183 coordinates substrate. Residues Lys219 and Thr247 each contribute to the FMN site. Residue 248–249 participates in substrate binding; the sequence is NT. Residues Gly269, Gly298, and 319–320 each bind FMN; that span reads YT.

It belongs to the dihydroorotate dehydrogenase family. Type 2 subfamily. As to quaternary structure, monomer. FMN serves as cofactor.

It localises to the cell membrane. The enzyme catalyses (S)-dihydroorotate + a quinone = orotate + a quinol. The protein operates within pyrimidine metabolism; UMP biosynthesis via de novo pathway; orotate from (S)-dihydroorotate (quinone route): step 1/1. Functionally, catalyzes the conversion of dihydroorotate to orotate with quinone as electron acceptor. This chain is Dihydroorotate dehydrogenase (quinone), found in Roseiflexus castenholzii (strain DSM 13941 / HLO8).